A 212-amino-acid polypeptide reads, in one-letter code: Agglutinin isolectin 1 (212 aa).

Residues 1 to 26 (MKMMSTRALALGAAAVLAFAAATAQA) form the signal peptide. Gln27 is subject to Pyrrolidone carboxylic acid. Chitin-binding type-1 domains lie at 27-68 (QRCG…ACWT), 69-111 (SKRC…PCRA), 112-154 (DIKC…ACST), and 155-197 (DKPC…GCDG). 16 cysteine pairs are disulfide-bonded: Cys29–Cys44, Cys38–Cys50, Cys43–Cys57, Cys61–Cys66, Cys72–Cys87, Cys81–Cys93, Cys86–Cys100, Cys104–Cys109, Cys115–Cys130, Cys124–Cys136, Cys129–Cys143, Cys147–Cys152, Cys158–Cys173, Cys167–Cys179, Cys172–Cys186, and Cys190–Cys195. 36–38 (MEC) lines the substrate pocket. Residue 88-99 (SQYGYCGFGAEY) participates in substrate binding. 140-141 (SE) provides a ligand contact to substrate. The propeptide occupies 198-212 (VFAEAITANSTLLQE).

Homodimer, u-shaped.

Functionally, N-acetyl-D-glucosamine / N-acetyl-D-neuraminic acid binding lectin. This is Agglutinin isolectin 1 from Triticum aestivum (Wheat).